A 92-amino-acid chain; its full sequence is uncharacterized protein (92 aa).

This is an uncharacterized protein from Schizosaccharomyces pombe (strain 972 / ATCC 24843) (Fission yeast).